Here is a 624-residue protein sequence, read N- to C-terminus: Sodium/potassium/calcium exchanger 3 (624 aa).

The N-terminal stretch at 1–25 (RDLLLSQLCFLASVALLLWSLSSLR) is a signal peptide. Residues 26 to 88 (EQKELDLMDL…DIFSNEDRRQ (63 aa)) lie on the Extracellular side of the membrane. N-linked (GlcNAc...) asparagine glycosylation is found at asparagine 52 and asparagine 67. The helical transmembrane segment at 89-109 (GAVVLHVLCAMYMFYALAIVC) threads the bilayer. Over 110 to 133 (DDFFVPSLEKICERLHLSEDVAGA) the chain is Cytoplasmic. One copy of the Alpha-1 repeat lies at 130-170 (VAGATFMAAGSSAPELFTSVIGVFITKGDVGVGTIVGSAVF). The chain crosses the membrane as a helical span at residues 134–154 (TFMAAGSSAPELFTSVIGVFI). At 155–163 (TKGDVGVGT) the chain is on the extracellular side. Residues 164–184 (IVGSAVFNILCIIGVCGLFAG) traverse the membrane as a helical segment. Over 185-191 (QVVALSS) the chain is Cytoplasmic. Residues 192–212 (WCLLRDSIYYTLSVVALIVFI) traverse the membrane as a helical segment. The Extracellular portion of the chain corresponds to 213-215 (YDE). Residues 216–236 (KVSWWESLVLVLMYLIYIIIM) form a helical membrane-spanning segment. Residues 237 to 465 (KYNACIHQCF…WFMVTFASST (229 aa)) are Cytoplasmic-facing. The residue at position 289 (serine 289) is a Phosphoserine. The segment covering 386-414 (AEADNETENENEDENNENDEEEDEDDDEG) has biased composition (acidic residues). Positions 386 to 421 (AEADNETENENEDENNENDEEEDEDDDEGPYTPFDP) are disordered. The helical transmembrane segment at 466–486 (LWIAAFSYMMVWMVTIIGYTL) threads the bilayer. Residues 487-491 (GIPDV) are Extracellular-facing. Residues 492 to 512 (IMGITFLAAGTSVPDCMASLI) form a helical membrane-spanning segment. The stretch at 499–530 (AAGTSVPDCMASLIVARQGMGDMAVSNSIGSN) is one Alpha-2 repeat. Topologically, residues 513–530 (VARQGMGDMAVSNSIGSN) are cytoplasmic. A helical membrane pass occupies residues 531–551 (VFDILIGLGLPWALQTLAVDY). At 552–561 (GSYIRLNSRG) the chain is on the extracellular side. A helical transmembrane segment spans residues 562 to 582 (LIYSVGLLLASVFVTVFGVHL). The Cytoplasmic portion of the chain corresponds to 583–596 (NKWQLDKKLGCGCL). A helical transmembrane segment spans residues 597–617 (FLYGVFLCFSIMTEFNVFTFV). At 618-624 (NLPMCGD) the chain is on the extracellular side.

The protein belongs to the Ca(2+):cation antiporter (CaCA) (TC 2.A.19) family. SLC24A subfamily. As to expression, abundant in the brain. Expressed at low levels in the aorta, uterus and intestine.

The protein resides in the cell membrane. The enzyme catalyses Ca(2+)(out) + K(+)(out) + 4 Na(+)(in) = Ca(2+)(in) + K(+)(in) + 4 Na(+)(out). Calcium, potassium:sodium antiporter that transports 1 Ca(2+) and 1 K(+) in exchange for 4 Na(+). The polypeptide is Sodium/potassium/calcium exchanger 3 (Slc24a3) (Rattus norvegicus (Rat)).